Consider the following 199-residue polypeptide: Fe/S biogenesis protein NfuA (199 aa).

[4Fe-4S] cluster-binding residues include C151 and C154.

The protein belongs to the NfuA family. Homodimer. [4Fe-4S] cluster is required as a cofactor.

Involved in iron-sulfur cluster biogenesis. Binds a 4Fe-4S cluster, can transfer this cluster to apoproteins, and thereby intervenes in the maturation of Fe/S proteins. Could also act as a scaffold/chaperone for damaged Fe/S proteins. The polypeptide is Fe/S biogenesis protein NfuA (Xanthomonas euvesicatoria pv. vesicatoria (strain 85-10) (Xanthomonas campestris pv. vesicatoria)).